The primary structure comprises 188 residues: Acireductone dioxygenase 1 (188 aa).

Histidine 90, histidine 92, glutamate 96, and histidine 135 together coordinate Fe(2+). Ni(2+) contacts are provided by histidine 90, histidine 92, glutamate 96, and histidine 135.

The protein belongs to the acireductone dioxygenase (ARD) family. It depends on Fe(2+) as a cofactor. Requires Ni(2+) as cofactor.

It is found in the cytoplasm. It localises to the nucleus. The catalysed reaction is 1,2-dihydroxy-5-(methylsulfanyl)pent-1-en-3-one + O2 = 4-methylsulfanyl-2-oxobutanoate + formate + 2 H(+). The enzyme catalyses 1,2-dihydroxy-5-(methylsulfanyl)pent-1-en-3-one + O2 = 3-(methylsulfanyl)propanoate + CO + formate + 2 H(+). The protein operates within amino-acid biosynthesis; L-methionine biosynthesis via salvage pathway; L-methionine from S-methyl-5-thio-alpha-D-ribose 1-phosphate: step 5/6. Functionally, catalyzes 2 different reactions between oxygen and the acireductone 1,2-dihydroxy-3-keto-5-methylthiopentene (DHK-MTPene) depending upon the metal bound in the active site. Fe-containing acireductone dioxygenase (Fe-ARD) produces formate and 2-keto-4-methylthiobutyrate (KMTB), the alpha-ketoacid precursor of methionine in the methionine recycle pathway. Ni-containing acireductone dioxygenase (Ni-ARD) produces methylthiopropionate, carbon monoxide and formate, and does not lie on the methionine recycle pathway. The polypeptide is Acireductone dioxygenase 1 (Vitis vinifera (Grape)).